Reading from the N-terminus, the 148-residue chain is Wound-induced proteinase inhibitor 2 (148 aa).

The signal sequence occupies residues 1–25; it reads MAVHKEVNFVAYLLIVLGMFLYVDA. The 1; trypsin-inhibitory repeat unit spans residues 26–81; the sequence is KACTRECGNLGFGICPRSEGSPLNPICINCCSGYKGCNYYNSFGKFICEGESDPKR. 8 disulfides stabilise this stretch: Cys-28–Cys-116, Cys-32–Cys-112, Cys-40–Cys-122, Cys-52–Cys-89, Cys-55–Cys-73, Cys-56–Cys-85, Cys-62–Cys-98, and Cys-115–Cys-133. The stretch at 83–141 is one 2; chymotrypsin-inhibitory repeat; it reads NACTFNCDPNIAYSRCPRSQGKSLIYPTGCTTCCTGYKGCYYFGKDGKFVCEGESDEPK.

The protein belongs to the protease inhibitor I20 (potato type II proteinase inhibitor) family.

It is found in the secreted. Functionally, potent inhibitor of both trypsin and chymotrypsin. The protein is Wound-induced proteinase inhibitor 2 of Solanum lycopersicum (Tomato).